The chain runs to 549 residues: Glutamyl-tRNA(Gln) amidotransferase subunit B, chloroplastic/mitochondrial (549 aa).

This sequence belongs to the GatB/GatE family. GatB subfamily. In terms of assembly, subunit of the heterotrimeric GatCAB amidotransferase (AdT) complex, composed of A, B and C subunits.

The protein localises to the mitochondrion. It localises to the plastid. The protein resides in the chloroplast. It catalyses the reaction L-glutamyl-tRNA(Gln) + L-glutamine + ATP + H2O = L-glutaminyl-tRNA(Gln) + L-glutamate + ADP + phosphate + H(+). In terms of biological role, allows the formation of correctly charged Gln-tRNA(Gln) through the transamidation of misacylated Glu-tRNA(Gln) in chloroplasts and mitochondria. The reaction takes place in the presence of glutamine and ATP through an activated gamma-phospho-Glu-tRNA(Gln). The sequence is that of Glutamyl-tRNA(Gln) amidotransferase subunit B, chloroplastic/mitochondrial from Ricinus communis (Castor bean).